Reading from the N-terminus, the 305-residue chain is tRNA pseudouridine synthase B (305 aa).

The active-site Nucleophile is aspartate 38.

The protein belongs to the pseudouridine synthase TruB family. Type 1 subfamily.

It carries out the reaction uridine(55) in tRNA = pseudouridine(55) in tRNA. Responsible for synthesis of pseudouridine from uracil-55 in the psi GC loop of transfer RNAs. In Latilactobacillus sakei subsp. sakei (strain 23K) (Lactobacillus sakei subsp. sakei), this protein is tRNA pseudouridine synthase B.